We begin with the raw amino-acid sequence, 527 residues long: Tyrosine--tRNA ligase, cytoplasmic (527 aa).

Tyrosine 39 serves as a coordination point for L-tyrosine. The 'HIGH' region signature appears at 44 to 52 (TTGKPHVAY). The L-tyrosine site is built by tyrosine 166, glutamine 170, aspartate 173, and glutamine 188. A 'KMSKS' region motif is present at residues 222–226 (KMSSS). A Nuclear localization signal motif is present at residues 242–247 (KKKLKK). The disordered stretch occupies residues 337 to 362 (TNAAYPNPSKAKPAEKGTKNSEPETI). Over residues 348–358 (KPAEKGTKNSE) the composition is skewed to basic and acidic residues. The tRNA-binding domain maps to 363–467 (VPSRLDIRVG…AECCAGERVY (105 aa)).

This sequence belongs to the class-I aminoacyl-tRNA synthetase family. Homodimer.

It is found in the cytoplasm. The protein localises to the nucleus. It catalyses the reaction tRNA(Tyr) + L-tyrosine + ATP = L-tyrosyl-tRNA(Tyr) + AMP + diphosphate + H(+). Catalyzes the attachment of tyrosine to tRNA(Tyr) in a two-step reaction: tyrosine is first activated by ATP to form Tyr-AMP and then transferred to the acceptor end of tRNA(Tyr). The sequence is that of Tyrosine--tRNA ligase, cytoplasmic (YARS1) from Gallus gallus (Chicken).